The following is a 1209-amino-acid chain: Major DNA-binding protein (1209 aa).

A disordered region spans residues 290-312; that stretch reads NAGKGSGRAQRQGDGSGSKNSAS. Residues 503 to 516 fold into a zinc finger; that stretch reads CGLCNQATRPACAH. The short motif at 849–850 is the Required for filament formation element; sequence FW. The required for nuclear localization stretch occupies residues 1182 to 1209; the sequence is QKRSLPDDILFDMGAPPEKKSGLTFDML.

It belongs to the herpesviridae major DNA-binding protein family. Homooligomers. Forms double-helical filaments necessary for the formation of replication compartments within the host nucleus. Interacts with the origin-binding protein. Interacts with the helicase primase complex; this interaction stimulates primer synthesis activity of the helicase-primase complex. Interacts with the DNA polymerase. Interacts with the alkaline exonuclease; this interaction increases its nuclease processivity.

The protein resides in the host nucleus. Functionally, plays several crucial roles in viral infection. Participates in the opening of the viral DNA origin to initiate replication by interacting with the origin-binding protein. May disrupt loops, hairpins and other secondary structures present on ssDNA to reduce and eliminate pausing of viral DNA polymerase at specific sites during elongation. Promotes viral DNA recombination by performing strand-transfer, characterized by the ability to transfer a DNA strand from a linear duplex to a complementary single-stranded DNA circle. Can also catalyze the renaturation of complementary single strands. Additionally, reorganizes the host cell nucleus, leading to the formation of prereplicative sites and replication compartments. This process is driven by the protein which can form double-helical filaments in the absence of DNA. This chain is Major DNA-binding protein, found in Equine herpesvirus 1 (strain Ab4p) (EHV-1).